The following is a 391-amino-acid chain: Pectin acetylesterase 11 (391 aa).

A signal peptide spans 1–23; the sequence is MTWLKQMWSSILVLAVVVIGARA. Residues S171, D267, and H334 each act as charge relay system in the active site.

It belongs to the pectinacetylesterase family.

The protein localises to the secreted. It localises to the cell wall. Hydrolyzes acetyl esters in homogalacturonan regions of pectin. In type I primary cell wall, galacturonic acid residues of pectin can be acetylated at the O-2 and O-3 positions. Decreasing the degree of acetylation of pectin gels in vitro alters their physical properties. This Arabidopsis thaliana (Mouse-ear cress) protein is Pectin acetylesterase 11.